The primary structure comprises 499 residues: Laccase (499 aa).

2 Plastocyanin-like domains span residues 2-127 (VGPV…FVVY) and 139-281 (VDND…ILRY). Residues N51 and N54 are each glycosylated (N-linked (GlcNAc...) asparagine). H64, H66, H109, and H111 together coordinate Cu cation. Cystine bridges form between C85/C488 and C117/C205. At Y196 the chain carries 3'-nitrotyrosine. 4 N-linked (GlcNAc...) asparagine glycosylation sites follow: N208, N217, N292, and N333. The region spanning 348-470 (SVPVLLQILS…GGFAVVQAED (123 aa)) is the Plastocyanin-like 3 domain. Residue Y372 is modified to 3'-nitrotyrosine. An N-linked (GlcNAc...) asparagine glycan is attached at N377. H395, H398, and H400 together coordinate Cu cation. N-linked (GlcNAc...) asparagine glycosylation is found at N416 and N436. Residues H452, C453, H454, and H458 each contribute to the Cu cation site.

This sequence belongs to the multicopper oxidase family. Cu cation is required as a cofactor.

It localises to the secreted. The catalysed reaction is 4 hydroquinone + O2 = 4 benzosemiquinone + 2 H2O. In terms of biological role, lignin degradation and detoxification of lignin-derived products. This is Laccase from Trametes maxima (White-rot fungus).